The following is a 506-amino-acid chain: Histidine ammonia-lyase (506 aa).

The 5-imidazolinone (Ala-Gly) cross-link spans 141 to 143; the sequence is ASG. Residue Ser-142 is modified to 2,3-didehydroalanine (Ser).

The protein belongs to the PAL/histidase family. In terms of processing, contains an active site 4-methylidene-imidazol-5-one (MIO), which is formed autocatalytically by cyclization and dehydration of residues Ala-Ser-Gly.

The protein localises to the cytoplasm. It carries out the reaction L-histidine = trans-urocanate + NH4(+). It functions in the pathway amino-acid degradation; L-histidine degradation into L-glutamate; N-formimidoyl-L-glutamate from L-histidine: step 1/3. The protein is Histidine ammonia-lyase of Burkholderia multivorans (strain ATCC 17616 / 249).